Here is a 59-residue protein sequence, read N- to C-terminus: Insertion element IS986 uncharacterized 6.6 kDa protein (59 aa).

A disordered region spans residues 1 to 26 (MRKWVRQAQVDAGARPGTTTEESAEI).

Belongs to the transposase 8 family.

The protein is Insertion element IS986 uncharacterized 6.6 kDa protein of Mycobacterium tuberculosis.